Consider the following 198-residue polypeptide: Na(+)-translocating NADH-quinone reductase subunit E (198 aa).

6 helical membrane passes run 11 to 31 (AVFI…FLAV), 39 to 59 (FGLG…NNLV), 77 to 97 (FLNF…LEMI), 109 to 129 (LGIF…VSFM), 140 to 160 (IVYG…LASI), and 176 to 196 (LGVT…FSGV).

Belongs to the NqrDE/RnfAE family. Composed of six subunits; NqrA, NqrB, NqrC, NqrD, NqrE and NqrF.

The protein resides in the cell inner membrane. The catalysed reaction is a ubiquinone + n Na(+)(in) + NADH + H(+) = a ubiquinol + n Na(+)(out) + NAD(+). NQR complex catalyzes the reduction of ubiquinone-1 to ubiquinol by two successive reactions, coupled with the transport of Na(+) ions from the cytoplasm to the periplasm. NqrA to NqrE are probably involved in the second step, the conversion of ubisemiquinone to ubiquinol. This chain is Na(+)-translocating NADH-quinone reductase subunit E, found in Proteus mirabilis (strain HI4320).